The primary structure comprises 497 residues: Probable cytosol aminopeptidase (497 aa).

The Mn(2+) site is built by Lys267 and Asp272. Lys279 is an active-site residue. Residues Asp290, Asp349, and Glu351 each coordinate Mn(2+). Arg353 is a catalytic residue.

This sequence belongs to the peptidase M17 family. The cofactor is Mn(2+).

The protein resides in the cytoplasm. The enzyme catalyses Release of an N-terminal amino acid, Xaa-|-Yaa-, in which Xaa is preferably Leu, but may be other amino acids including Pro although not Arg or Lys, and Yaa may be Pro. Amino acid amides and methyl esters are also readily hydrolyzed, but rates on arylamides are exceedingly low.. It catalyses the reaction Release of an N-terminal amino acid, preferentially leucine, but not glutamic or aspartic acids.. In terms of biological role, presumably involved in the processing and regular turnover of intracellular proteins. Catalyzes the removal of unsubstituted N-terminal amino acids from various peptides. In Pseudomonas putida (strain ATCC 47054 / DSM 6125 / CFBP 8728 / NCIMB 11950 / KT2440), this protein is Probable cytosol aminopeptidase.